We begin with the raw amino-acid sequence, 1040 residues long: Multidrug resistance protein MdtB (1040 aa).

11 helical membrane passes run 15 to 37 (LFIM…GIIG), 345 to 362 (FELM…YLFL), 367 to 389 (ATII…MVFL), 396 to 418 (LTLM…VIEN), 438 to 460 (GEIG…PLLF), 472 to 494 (FAIT…TPMM), 535 to 557 (HPWL…WVFI), 867 to 889 (VWLI…ESFI), 909 to 931 (LMIA…IGIV), 968 to 990 (ILMT…GVGA), and 1000 to 1022 (MVGG…YLLF).

The protein belongs to the resistance-nodulation-cell division (RND) (TC 2.A.6) family. MdtB subfamily. In terms of assembly, part of a tripartite efflux system composed of MdtA, MdtB and MdtC. MdtB forms a heteromultimer with MdtC.

The protein resides in the cell inner membrane. The MdtABC tripartite complex confers resistance against novobiocin and deoxycholate. This Escherichia coli O157:H7 protein is Multidrug resistance protein MdtB.